A 503-amino-acid polypeptide reads, in one-letter code: Zinc finger and BTB domain-containing protein 37 (503 aa).

Residues 32–96 (CDIVVNVQGQ…CYTGRICLQL (65 aa)) enclose the BTB domain. Disordered stretches follow at residues 140-206 (QTRT…SDVE) and 280-344 (GHGS…QVEE). Residues 144 to 154 (KHQERPPESHR) are compositionally biased toward basic and acidic residues. A compositionally biased stretch (polar residues) spans 155 to 167 (VTPNLNRSLSPRH). The segment covering 319–336 (TERHRARSESPGRMDEPK) has biased composition (basic and acidic residues). 3 C2H2-type zinc fingers span residues 373 to 395 (LTCIYCAKSFNQKGSLDRHMRLH), 401 to 423 (FVCRMCGKKYTRKDQLEYHIRKH), and 429 to 452 (FHCHVCGKSFPFQAILNQHFRKNH). Residues 457-503 (PLEGPHSISPETTVTSRGQAEEESPSQEETVAPGEAVQGSVSTTGPD) form a disordered region. The segment covering 465-474 (SPETTVTSRG) has biased composition (polar residues).

Its subcellular location is the nucleus. Functionally, may be involved in transcriptional regulation. This is Zinc finger and BTB domain-containing protein 37 (ZBTB37) from Homo sapiens (Human).